Here is a 654-residue protein sequence, read N- to C-terminus: MNESALNPNYLFHPFVKRFPGDPEHVRNISDIQQLEKYPISERFPCQTVTDALFIAAKKYQHARAMSYLPNGRADDVLQSWSYLEFLEQCIGAANLFHSLGIESDHSVAFLLPNMPEMVFGLWGAQAVAISTPINPFLAVNHICGIVTETKTTILVTLSPDTNPSLFEKALAVKHNTTHTMTLVTIGTPCEDAIDWHTELKKQPFNRYLFNRQLTGMETSAYFHTGGTTGTPKIARHTHRGAMINACQMLIVGPTETELDTKSKVSLCALPLFHVNAIVVSSLTSLLNGSELLLAGQQGFRNKALMSDFWRIVERFKVNFFAGVPTVYAALLEQPVEQHNIDSLFYCGCGSSPMPQVLIKEFTQRTGADICEGYGMTETTACASTHYYYGDRKVGSVGMRVPYQHIRAVHLDDNGQIIKECDCDEVGVLLIQGPNVIPEYKQAFANEQAWPEPGWLNTGDLGKFDADGYLWLTGRQKDLIIRGGHNIDPLIIENTLVSHSDVVMAAAVGKPDAYAGELPVAYVTLTSGATLSADELKQYCKDYISEPAASPVEIYITAELPMTPIGKIFKLPLKHDVIVRFVRELIQALDDTLDFSIDIIDDVSTGNIVSINFAATREKMEAVASQLQQELDKLHFQWKCTFTPVLAEQTVLES.

This sequence belongs to the ATP-dependent AMP-binding enzyme family.

The catalysed reaction is ATP + a marinolic acid + CoA = AMP + diphosphate + a marinoloyl-CoA.. The enzyme catalyses ATP + a pseudomonic acid + CoA = AMP + diphosphate + a pseudomonoyl-CoA.. It catalyses the reaction marinolate C + ATP + CoA = marinoloyl-CoA C + AMP + diphosphate. It carries out the reaction pseudomonate C + ATP + CoA = pseudomonoyl-CoA C + AMP + diphosphate. It participates in antibiotic biosynthesis. Functionally, acyl-CoA ligase that catalyzes the CoA acylation of pseudomonate C, leading to the formation of pseudomonoyl-CoA C (PAC-CoA). Also shows high activity with pseudomonoyl-CoA A as substrate. In addition, can activate acetic, octanoic, 2,4-dodecadienoic and 2,4-decadienoic acids, although with much lower activity. In vivo, is probably involved in the biosynthesis of thiomarinol, a naturally occurring double-headed antibiotic. The sequence is that of Marinolic acid--CoA ligase from Pseudoalteromonas sp. (strain SANK 73390).